The following is a 306-amino-acid chain: Ornithine carbamoyltransferase (306 aa).

Residues Ser-54–Thr-57, Gln-81, Arg-105, and His-132–Gln-135 contribute to the carbamoyl phosphate site. Residues Asn-162, Asp-226, and Ser-230 to Met-231 each bind L-ornithine. Carbamoyl phosphate is bound by residues Cys-266–Leu-267 and Arg-294.

Belongs to the aspartate/ornithine carbamoyltransferase superfamily. OTCase family.

The protein localises to the cytoplasm. The enzyme catalyses carbamoyl phosphate + L-ornithine = L-citrulline + phosphate + H(+). Its pathway is amino-acid biosynthesis; L-arginine biosynthesis; L-arginine from L-ornithine and carbamoyl phosphate: step 1/3. Functionally, reversibly catalyzes the transfer of the carbamoyl group from carbamoyl phosphate (CP) to the N(epsilon) atom of ornithine (ORN) to produce L-citrulline. The protein is Ornithine carbamoyltransferase of Sulfolobus acidocaldarius (strain ATCC 33909 / DSM 639 / JCM 8929 / NBRC 15157 / NCIMB 11770).